A 292-amino-acid polypeptide reads, in one-letter code: Elongation factor Ts (292 aa).

Residues 79–82 (TDFV) are involved in Mg(2+) ion dislocation from EF-Tu.

Belongs to the EF-Ts family.

The protein resides in the cytoplasm. Functionally, associates with the EF-Tu.GDP complex and induces the exchange of GDP to GTP. It remains bound to the aminoacyl-tRNA.EF-Tu.GTP complex up to the GTP hydrolysis stage on the ribosome. The polypeptide is Elongation factor Ts (Xanthomonas campestris pv. campestris (strain B100)).